Consider the following 63-residue polypeptide: 2-hydroxymuconate tautomerase (63 aa).

The Proton acceptor; via imino nitrogen role is filled by P2.

Belongs to the 4-oxalocrotonate tautomerase family. Homohexamer.

The enzyme catalyses (2Z,4E)-2-hydroxyhexa-2,4-dienedioate = (3E)-2-oxohex-3-enedioate. The protein operates within aromatic compound metabolism; salicylate degradation. Catalyzes the ketonization of 2-hydroxymuconate stereoselectively to yield 2-oxo-3-hexenedioate. In Pseudomonas fluorescens, this protein is 2-hydroxymuconate tautomerase (nahJ).